Consider the following 198-residue polypeptide: uncharacterized protein (198 aa).

The C4-type zinc-finger motif lies at 9–43; that stretch reads CPVCGGKGTFVITSHQIDIPYFGPVLETTMICEKC.

The protein belongs to the ZPR1 family.

This is an uncharacterized protein from Methanocaldococcus jannaschii (strain ATCC 43067 / DSM 2661 / JAL-1 / JCM 10045 / NBRC 100440) (Methanococcus jannaschii).